We begin with the raw amino-acid sequence, 118 residues long: Immunoglobulin heavy variable 3-9 (118 aa).

The N-terminal stretch at 1-19 (MELGLSWIFLLAILKGVQC) is a signal peptide. The framework-1 stretch occupies residues 20–44 (EVQLVESGGGLVQPGRSLRLSCAAS). An Ig-like domain is found at 20-118 (EVQLVESGGG…DTALYYCAKD (99 aa)). C41 and C115 form a disulfide bridge. The complementarity-determining-1 stretch occupies residues 45–52 (GFTFDDYA). The tract at residues 53–69 (MHWVRQAPGKGLEWVSG) is framework-2. A complementarity-determining-2 region spans residues 70–77 (ISWNSGSI). Residues 78–115 (GYADSVKGRFTISRDNAKNSLYLQMNSLRAEDTALYYC) form a framework-3 region. A complementarity-determining-3 region spans residues 116–118 (AKD).

In terms of assembly, immunoglobulins are composed of two identical heavy chains and two identical light chains; disulfide-linked.

It is found in the secreted. The protein resides in the cell membrane. V region of the variable domain of immunoglobulin heavy chains that participates in the antigen recognition. Immunoglobulins, also known as antibodies, are membrane-bound or secreted glycoproteins produced by B lymphocytes. In the recognition phase of humoral immunity, the membrane-bound immunoglobulins serve as receptors which, upon binding of a specific antigen, trigger the clonal expansion and differentiation of B lymphocytes into immunoglobulins-secreting plasma cells. Secreted immunoglobulins mediate the effector phase of humoral immunity, which results in the elimination of bound antigens. The antigen binding site is formed by the variable domain of one heavy chain, together with that of its associated light chain. Thus, each immunoglobulin has two antigen binding sites with remarkable affinity for a particular antigen. The variable domains are assembled by a process called V-(D)-J rearrangement and can then be subjected to somatic hypermutations which, after exposure to antigen and selection, allow affinity maturation for a particular antigen. The chain is Immunoglobulin heavy variable 3-9 from Homo sapiens (Human).